A 312-amino-acid chain; its full sequence is Methionyl-tRNA formyltransferase (312 aa).

117 to 120 (SLLP) provides a ligand contact to (6S)-5,6,7,8-tetrahydrofolate.

This sequence belongs to the Fmt family.

It catalyses the reaction L-methionyl-tRNA(fMet) + (6R)-10-formyltetrahydrofolate = N-formyl-L-methionyl-tRNA(fMet) + (6S)-5,6,7,8-tetrahydrofolate + H(+). Its function is as follows. Attaches a formyl group to the free amino group of methionyl-tRNA(fMet). The formyl group appears to play a dual role in the initiator identity of N-formylmethionyl-tRNA by promoting its recognition by IF2 and preventing the misappropriation of this tRNA by the elongation apparatus. The polypeptide is Methionyl-tRNA formyltransferase (Bordetella bronchiseptica (strain ATCC BAA-588 / NCTC 13252 / RB50) (Alcaligenes bronchisepticus)).